A 188-amino-acid chain; its full sequence is dCTP deaminase (188 aa).

Residues 111–116, 135–137, Q156, Y170, and Q180 each bind dCTP; these read KSTYAR and TLE. E137 serves as the catalytic Proton donor/acceptor.

Belongs to the dCTP deaminase family. Homotrimer.

The catalysed reaction is dCTP + H2O + H(+) = dUTP + NH4(+). Its pathway is pyrimidine metabolism; dUMP biosynthesis; dUMP from dCTP (dUTP route): step 1/2. Functionally, catalyzes the deamination of dCTP to dUTP. The protein is dCTP deaminase of Acidovorax sp. (strain JS42).